Here is a 191-residue protein sequence, read N- to C-terminus: Flagellar transcriptional regulator FlhC (191 aa).

Positions 139, 142, 159, and 162 each coordinate Zn(2+).

Belongs to the FlhC family. In terms of assembly, heterohexamer composed of two FlhC and four FlhD subunits. Each FlhC binds a FlhD dimer, forming a heterotrimer, and a hexamer assembles by dimerization of two heterotrimers. Requires Zn(2+) as cofactor.

The protein resides in the cytoplasm. Functions in complex with FlhD as a master transcriptional regulator that regulates transcription of several flagellar and non-flagellar operons by binding to their promoter region. Activates expression of class 2 flagellar genes, including fliA, which is a flagellum-specific sigma factor that turns on the class 3 genes. Also regulates genes whose products function in a variety of physiological pathways. The chain is Flagellar transcriptional regulator FlhC from Enterobacter cloacae subsp. cloacae (strain ATCC 13047 / DSM 30054 / NBRC 13535 / NCTC 10005 / WDCM 00083 / NCDC 279-56).